We begin with the raw amino-acid sequence, 1369 residues long: Rho guanine nucleotide exchange factor 10 (1369 aa).

Residues 1–106 (MRPPGFLSRA…ETTPVAEPTK (106 aa)) form a disordered region. Acidic residues predominate over residues 46–64 (NNEEEEGEQFDFDSGDEIP). Low complexity predominate over residues 83–100 (EAPAPTGGEDGAGAETTP). A Phosphoserine modification is found at Ser180. Residues 184–254 (EAETPEVTED…ENSDSEPDEM (71 aa)) form a disordered region. Polar residues predominate over residues 196–209 (PNSLSSEEPPTSED). The stretch at 304 to 355 (KKQLSHDLTRLKEHYEKKMRDLMASTVGVVEIQQLRQKHELKMQKLVKAAKD) forms a coiled coil. Ser379 carries the phosphoserine modification. One can recognise a DH domain in the interval 421–608 (VRRYILGSVV…ETLAEKLNER (188 aa)). Disordered stretches follow at residues 1226–1260 (KDKS…LSQG) and 1277–1297 (QKSD…SSSL). The span at 1279-1296 (SDLSSSSGSLSLSHGSSS) shows a compositional bias: low complexity. Ser1287 bears the Phosphoserine mark. Gln1338 is subject to N5-methylglutamine.

Methylated at Gln-1338 by N6AMT1.

In terms of biological role, may play a role in developmental myelination of peripheral nerves. The protein is Rho guanine nucleotide exchange factor 10 (ARHGEF10) of Homo sapiens (Human).